We begin with the raw amino-acid sequence, 178 residues long: ATP synthase subunit delta (178 aa).

Belongs to the ATPase delta chain family. In terms of assembly, F-type ATPases have 2 components, F(1) - the catalytic core - and F(0) - the membrane proton channel. F(1) has five subunits: alpha(3), beta(3), gamma(1), delta(1), epsilon(1). F(0) has three main subunits: a(1), b(2) and c(10-14). The alpha and beta chains form an alternating ring which encloses part of the gamma chain. F(1) is attached to F(0) by a central stalk formed by the gamma and epsilon chains, while a peripheral stalk is formed by the delta and b chains.

It is found in the cell inner membrane. Functionally, f(1)F(0) ATP synthase produces ATP from ADP in the presence of a proton or sodium gradient. F-type ATPases consist of two structural domains, F(1) containing the extramembraneous catalytic core and F(0) containing the membrane proton channel, linked together by a central stalk and a peripheral stalk. During catalysis, ATP synthesis in the catalytic domain of F(1) is coupled via a rotary mechanism of the central stalk subunits to proton translocation. Its function is as follows. This protein is part of the stalk that links CF(0) to CF(1). It either transmits conformational changes from CF(0) to CF(1) or is implicated in proton conduction. In Alcanivorax borkumensis (strain ATCC 700651 / DSM 11573 / NCIMB 13689 / SK2), this protein is ATP synthase subunit delta.